The sequence spans 430 residues: Enolase (430 aa).

Gln-163 contacts (2R)-2-phosphoglycerate. Glu-205 acts as the Proton donor in catalysis. Residues Asp-242, Glu-287, and Asp-314 each coordinate Mg(2+). (2R)-2-phosphoglycerate-binding residues include Lys-339, Arg-368, Ser-369, and Lys-390. Lys-339 (proton acceptor) is an active-site residue.

It belongs to the enolase family. The cofactor is Mg(2+).

Its subcellular location is the cytoplasm. It localises to the secreted. The protein resides in the cell surface. It carries out the reaction (2R)-2-phosphoglycerate = phosphoenolpyruvate + H2O. Its pathway is carbohydrate degradation; glycolysis; pyruvate from D-glyceraldehyde 3-phosphate: step 4/5. Its function is as follows. Catalyzes the reversible conversion of 2-phosphoglycerate (2-PG) into phosphoenolpyruvate (PEP). It is essential for the degradation of carbohydrates via glycolysis. The polypeptide is Enolase (Geobacillus sp. (strain WCH70)).